The sequence spans 249 residues: Pleckstrin homology domain-containing family F member 2 (249 aa).

Phosphoserine is present on S16. Residues 35-131 form the PH domain; the sequence is VLIGEGVLTK…WMNHINKCVT (97 aa). Position 44 is an N6-acetyllysine (K44). An FYVE-type zinc finger spans residues 152–212; sequence DSEATVCMRC…ICDFCYDLLS (61 aa). The Zn(2+) site is built by C158, C161, C175, C178, C183, C186, C204, and C207. The segment covering 221-233 has biased composition (polar residues); that stretch reads PARSDSYSQSLKS. A disordered region spans residues 221–249; the sequence is PARSDSYSQSLKSPLNDMSDDDDDDDSSD. Positions 238–249 are enriched in acidic residues; sequence MSDDDDDDDSSD. Phosphoserine occurs at positions 239 and 248.

In terms of assembly, may interact with EEA1. Expressed in placenta, ovary and small intestine, as well as in heart and pancreas. Also expressed in peripheral blood mononuclear cells and dendritic cells.

It is found in the early endosome membrane. The protein resides in the endoplasmic reticulum. Its function is as follows. May play a role in early endosome fusion upstream of RAB5, hence regulating receptor trafficking and fluid-phase transport. Enhances cellular sensitivity to TNF-induced apoptosis. The sequence is that of Pleckstrin homology domain-containing family F member 2 (PLEKHF2) from Homo sapiens (Human).